Consider the following 60-residue polypeptide: Large ribosomal subunit protein bL32 (60 aa).

The protein belongs to the bacterial ribosomal protein bL32 family.

This Borrelia hermsii (strain HS1 / DAH) protein is Large ribosomal subunit protein bL32.